The following is a 93-amino-acid chain: NADH-ubiquinone oxidoreductase chain 4L (93 aa).

3 helical membrane passes run 1-21 (MVWM…VIFR), 29-49 (LFVG…VFLM), and 54-74 (LILL…ALLV).

It belongs to the complex I subunit 4L family.

Its subcellular location is the mitochondrion membrane. The enzyme catalyses a ubiquinone + NADH + 5 H(+)(in) = a ubiquinol + NAD(+) + 4 H(+)(out). Its function is as follows. Core subunit of the mitochondrial membrane respiratory chain NADH dehydrogenase (Complex I) that is believed to belong to the minimal assembly required for catalysis. Complex I functions in the transfer of electrons from NADH to the respiratory chain. The immediate electron acceptor for the enzyme is believed to be ubiquinone. The protein is NADH-ubiquinone oxidoreductase chain 4L (ND4L) of Mytilus edulis (Blue mussel).